The primary structure comprises 207 residues: Ribonuclease HII (207 aa).

An RNase H type-2 domain is found at Gln20–Glu207. The a divalent metal cation site is built by Asp26, Glu27, and Asp118.

The protein belongs to the RNase HII family. The cofactor is Mn(2+). Mg(2+) is required as a cofactor.

The protein localises to the cytoplasm. The enzyme catalyses Endonucleolytic cleavage to 5'-phosphomonoester.. In terms of biological role, endonuclease that specifically degrades the RNA of RNA-DNA hybrids. In Aliivibrio salmonicida (strain LFI1238) (Vibrio salmonicida (strain LFI1238)), this protein is Ribonuclease HII.